Reading from the N-terminus, the 253-residue chain is Probable transcriptional regulatory protein slr0989 (253 aa).

The disordered stretch occupies residues 1–22 (MGGRKWQSIKRQKARVDAQKGK).

The protein belongs to the TACO1 family.

The protein resides in the cytoplasm. This is Probable transcriptional regulatory protein slr0989 from Synechocystis sp. (strain ATCC 27184 / PCC 6803 / Kazusa).